Reading from the N-terminus, the 138-residue chain is Large ribosomal subunit protein uL16 (138 aa).

Residues 1-15 (MLSPRKVKYRKKQRG) show a composition bias toward basic residues. The interval 1–20 (MLSPRKVKYRKKQRGRLSGE) is disordered.

Belongs to the universal ribosomal protein uL16 family. In terms of assembly, part of the 50S ribosomal subunit.

Binds 23S rRNA and is also seen to make contacts with the A and possibly P site tRNAs. The sequence is that of Large ribosomal subunit protein uL16 from Borrelia turicatae (strain 91E135).